The chain runs to 143 residues: Heat shock protein Hsp-16.48/Hsp-16.49 (143 aa).

In terms of domain architecture, sHSP spans 35–140; the sequence is HNSFNFSDNI…SSRSIPINFV (106 aa).

Belongs to the small heat shock protein (HSP20) family.

The sequence is that of Heat shock protein Hsp-16.48/Hsp-16.49 (hsp-16.48) from Caenorhabditis elegans.